We begin with the raw amino-acid sequence, 486 residues long: 2-hydroxymuconic semialdehyde dehydrogenase (486 aa).

Residues E254 and C288 contribute to the active site.

This sequence belongs to the aldehyde dehydrogenase family.

The enzyme catalyses (2Z,4E)-2-hydroxy-6-oxohexa-2,4-dienoate + NAD(+) + H2O = (2Z,4E)-2-hydroxyhexa-2,4-dienedioate + NADH + 2 H(+). Its pathway is aromatic compound metabolism; benzoate degradation via hydroxylation. Functionally, 2-hydroxymuconic acid semialdehyde can be converted to 2-hydroxypent-2,4-dienoate either directly by the action of 2-hydroxymuconic semialdehyde hydrolase (HMSH) or by the action of three sequential enzymes, the first of which is HMSD. The polypeptide is 2-hydroxymuconic semialdehyde dehydrogenase (dmpC) (Pseudomonas sp. (strain CF600)).